The chain runs to 162 residues: Succinate dehydrogenase assembly factor 2-A, mitochondrial (162 aa).

The transit peptide at 1–23 (MLRQLRLTMDISGWIFLPWRRSM) directs the protein to the mitochondrion.

Belongs to the SDHAF2 family. In terms of assembly, interacts with the flavoprotein subunit within the SDH catalytic dimer.

It is found in the mitochondrion matrix. Its function is as follows. Plays an essential role in the assembly of succinate dehydrogenase (SDH), an enzyme complex (also referred to as respiratory complex II) that is a component of both the tricarboxylic acid (TCA) cycle and the mitochondrial electron transport chain, and which couples the oxidation of succinate to fumarate with the reduction of ubiquinone (coenzyme Q) to ubiquinol. Required for flavinylation (covalent attachment of FAD) of the flavoprotein subunit of the SDH catalytic dimer. The protein is Succinate dehydrogenase assembly factor 2-A, mitochondrial of Drosophila erecta (Fruit fly).